The primary structure comprises 470 residues: MRIFNTLTRKKEEFIPITPGEVKMYVCGPTVYNFFHIGNGRTFIVFDTIRRYLEYRGYEVKFVQNFTDIDDKMIKKANEEGTTVKEIGDKYIKEYYEDADKLQIERATVNPRATEYIEDIIDFVAQLIEKGYAYEVEGDVYFNTKKFNDYGKLSGQSIEDLQMGASNRTSSIADERKNDPMDFAIWKAQKPGEPAWKCPWGMGRPGWHIECSCMAKKILGDTIDIHAGGMDLTFPHHENEVAQSEALTGMRFANYWMHSAYVNINNQKMSKSLNNFFTARDILKEYDSDVVRFFMMSAHYRLQINFSKDLLDSAKASVERLYNAIGNLENLIDEVSRENISEEEVNYLNSLKKYREKYIEKMDDDFNTADALTVLFELTKDTNTNINVNSSKELVNKALNLIRELGAPLGLLQKITKGSLEDEIESLIQQRQDARKNKDFALSDKIRDDLKDRGIVLEDTPQGVRWKKIN.

A Zn(2+)-binding site is contributed by C27. Residues P29–N39 carry the 'HIGH' region motif. Residues C211, H236, and E240 each coordinate Zn(2+). The 'KMSKS' region motif lies at K268–S272. An ATP-binding site is contributed by K271.

It belongs to the class-I aminoacyl-tRNA synthetase family. In terms of assembly, monomer. The cofactor is Zn(2+).

Its subcellular location is the cytoplasm. The enzyme catalyses tRNA(Cys) + L-cysteine + ATP = L-cysteinyl-tRNA(Cys) + AMP + diphosphate. This Clostridium botulinum (strain Eklund 17B / Type B) protein is Cysteine--tRNA ligase.